The primary structure comprises 1404 residues: Probable GPI-anchored adhesin-like protein PGA55 (1404 aa).

The first 19 residues, 1 to 19 (MVLLCKYKVSWVFVLSVAG), serve as a signal peptide directing secretion. 87 consecutive repeat copies span residues 104–109 (VSSSSS), 136–141 (VSSSSE), 156–161 (VSSSSK), 162–167 (VSSSSE), 183–188 (VSSSSQ), 196–201 (VSSSSE), 203–208 (VSSSSE), 209–214 (VSSSSE), 216–221 (VSSSSE), 222–227 (VSSSSE), 228–233 (VSSSSE), 234–239 (VSSSSQ), 247–252 (VSSSSE), 253–258 (VSSSSS), 261–266 (VSSSSE), 267–272 (VSSSSE), 274–279 (VSSSSE), 280–285 (VSSSSE), 286–291 (VSSSSE), 292–297 (VSSSSE), 298–303 (VSSSSE), 304–309 (VSSSSQ), 317–322 (VSSSSE), 324–329 (VSSSSE), 330–335 (VSSSSE), 336–341 (VSSSSE), 343–348 (VSSSSE), 349–354 (VSSSSE), 355–360 (VSSSSE), 361–366 (VSSSSQ), 374–379 (VSSSSE), 380–385 (VSSSSS), 388–393 (VSSSSE), 394–399 (VSSSSE), 401–406 (VSSSSE), 407–412 (VSSSSE), 413–418 (VSSSSE), 419–424 (VSSSSE), 425–430 (VSSSSE), 431–436 (VSSSSQ), 444–449 (VSSSSE), 450–455 (VSSSSE), 457–462 (VSSSSE), 463–468 (VSSSSE), 469–474 (VSSSSE), 475–480 (VSSSSQ), 488–493 (VSSSSE), 494–500 (VSSSSSE), 502–507 (VSSSSE), 508–513 (VSSSSE), 515–520 (VSSSSE), 521–526 (VSSSSE), 527–532 (VSSSSE), 533–538 (VSSSSQ), 546–551 (VSSSSE), 552–557 (VSSSSS), 560–565 (VSSSSE), 566–571 (VSSSSE), 573–578 (VSSSSE), 579–584 (VSSSSE), 585–590 (VSSSSE), 591–596 (VSSSSQ), 604–609 (VSSSSE), 611–616 (VSSSSE), 617–622 (VSSSSE), 623–628 (VSSSSE), 629–634 (VSSSSE), 635–640 (VSSSSE), 641–646 (VSSSSQ), 654–659 (VSSSSE), 660–665 (VSSSSS), 668–673 (VSSSSE), 674–679 (VSSSSE), 681–686 (VSSSSE), 687–692 (VSSSSE), 693–698 (VSSSSE), 699–704 (VSSSSQ), 712–717 (VSSSSE), 719–724 (VSSSSE), 725–730 (VSSSSE), 731–736 (VSSSSE), 737–742 (VSSSSE), 743–748 (VSSSSE), 749–754 (VSSSSE), 771–776 (VTSSSE), 777–782 (VSSSSQ), and 797–802 (VSSSSE). Residues 104 to 541 (VSSSSSEVIS…EVSSSSQVTS (438 aa)) form an 88 X 6 AA approximate tandem repeats region. A disordered region spans residues 113-833 (SSSSEEASSS…VSSSSASSEV (721 aa)). An N-linked (GlcNAc...) asparagine glycan is attached at N817. A 1-88 repeat occupies 824-829 (VSSSSA). N-linked (GlcNAc...) asparagine glycans are attached at residues N994 and N1074. Residue N1382 is the site of GPI-anchor amidated asparagine attachment. A propeptide spans 1383 to 1404 (AASRQSFNYKFIVGLILAYIIA) (removed in mature form).

The protein localises to the cell membrane. In terms of biological role, predicted GPI-anchored adhesin-like protein which may be involved in filamentous growth and chlamydospore formation. The chain is Probable GPI-anchored adhesin-like protein PGA55 (PGA55) from Candida albicans (strain SC5314 / ATCC MYA-2876) (Yeast).